The chain runs to 360 residues: S-adenosylmethionine:tRNA ribosyltransferase-isomerase (360 aa).

This sequence belongs to the QueA family. Monomer.

The protein resides in the cytoplasm. It catalyses the reaction 7-aminomethyl-7-carbaguanosine(34) in tRNA + S-adenosyl-L-methionine = epoxyqueuosine(34) in tRNA + adenine + L-methionine + 2 H(+). The protein operates within tRNA modification; tRNA-queuosine biosynthesis. In terms of biological role, transfers and isomerizes the ribose moiety from AdoMet to the 7-aminomethyl group of 7-deazaguanine (preQ1-tRNA) to give epoxyqueuosine (oQ-tRNA). This Burkholderia mallei (strain NCTC 10247) protein is S-adenosylmethionine:tRNA ribosyltransferase-isomerase.